The primary structure comprises 451 residues: Vitamin D3 receptor (451 aa).

Residues 44-112 (PRICGVCGDR…RLKRCVDIGM (69 aa)) constitute a DNA-binding region (nuclear receptor). Residues cysteine 47, cysteine 50, cysteine 64, cysteine 67, cysteine 83, cysteine 89, cysteine 99, and cysteine 102 each contribute to the Zn(2+) site. NR C4-type zinc fingers lie at residues 47–67 (CGVC…CEGC) and 83–107 (CPFN…LKRC). 2 hinge regions span residues 113–149 (MKEF…KLSE) and 120–149 (DEEV…KLSE). An NR LBD domain is found at 150–447 (EQQKVIDTLL…LTPLVLEVFG (298 aa)). Serine 261 is a calcitriol binding site. Positions 270–288 (KMIPGFRDLTAEDQIALLK) are interaction with coactivator LXXLL motif. Arginine 298, serine 302, histidine 329, and histidine 421 together coordinate calcitriol. The 9aaTAD motif lies at 440–448 (PLVLEVFGN).

Belongs to the nuclear hormone receptor family. NR1 subfamily. Homodimer in the absence of bound vitamin D3. Heterodimer with RXRA after vitamin D3 binding. As to expression, expressed in kidney and intestine.

It localises to the nucleus. Its subcellular location is the cytoplasm. Nuclear receptor for calcitriol, the active form of vitamin D3 which mediates the action of this vitamin on cells. Enters the nucleus upon vitamin D3 binding where it forms heterodimers with the retinoid X receptor/RXR. The VDR-RXR heterodimers bind to specific response elements on DNA and activate the transcription of vitamin D3-responsive target genes. Plays a central role in calcium homeostasis. Also functions as a receptor for the secondary bile acid lithocholic acid (LCA) and its metabolites. This Gallus gallus (Chicken) protein is Vitamin D3 receptor (VDR).